The following is a 132-amino-acid chain: uncharacterized protein (132 aa).

The next 2 helical transmembrane spans lie at 44–64 and 75–95; these read FMSFISFIVSCRLFILVFTFI and IAMIDAVVNALLILIVLAMLF.

The protein resides in the cytoplasm. The protein localises to the membrane. This is an uncharacterized protein from Schizosaccharomyces pombe (strain 972 / ATCC 24843) (Fission yeast).